Consider the following 1164-residue polypeptide: Toxin subunit YenA1 (1164 aa).

The interval Arg-106 to Asn-131 is disordered. A compositionally biased stretch (low complexity) spans Thr-118–Thr-130.

As to quaternary structure, semipurified toxin complex consists of at least YenA1, YenA2, YenB, YenC1, YenC2, Chi1 and Chi2. The Yen-TC:K9 subcomplex is about 26 nm tall and 22 nm in diameter with 5-fold symmetry and 5 copies of YenA1, YenA2, Chi1 and Chi2; the chitinase subunits may be solvent accessible on the exterior the complex. The Yen-TC:K9 subcomplex has no insecticidal activity. The native complex with additional YenB, YenC1 and YenC2 subunits is 16 nm taller and is insecticidal; the toxicity-conferring subunits are present at about 1 copy each.

The protein resides in the secreted. Its activity is regulated as follows. Toxin complex is secreted when grown at 25 degrees Celsius or less; at higher temperatures the proteins are present intracellularly but not secreted. Part of an orally active toxin complex (TC) with strong insecticidal effects on larvae of the Coleoptera Costelytra zealandica, Acrossidius tasmania and Adoryphorus couloni and some Lepidoptera larvae. The TC has an endochitinase activity. The sequence is that of Toxin subunit YenA1 from Yersinia entomophaga.